We begin with the raw amino-acid sequence, 345 residues long: Biotin synthase (345 aa).

Positions 59–286 (NEVQLSTLLS…TTMVRLSAGR (228 aa)) constitute a Radical SAM core domain. Cys74, Cys78, and Cys81 together coordinate [4Fe-4S] cluster. Positions 118, 149, 209, and 281 each coordinate [2Fe-2S] cluster.

Belongs to the radical SAM superfamily. Biotin synthase family. Homodimer. [4Fe-4S] cluster is required as a cofactor. The cofactor is [2Fe-2S] cluster.

The catalysed reaction is (4R,5S)-dethiobiotin + (sulfur carrier)-SH + 2 reduced [2Fe-2S]-[ferredoxin] + 2 S-adenosyl-L-methionine = (sulfur carrier)-H + biotin + 2 5'-deoxyadenosine + 2 L-methionine + 2 oxidized [2Fe-2S]-[ferredoxin]. It participates in cofactor biosynthesis; biotin biosynthesis; biotin from 7,8-diaminononanoate: step 2/2. Functionally, catalyzes the conversion of dethiobiotin (DTB) to biotin by the insertion of a sulfur atom into dethiobiotin via a radical-based mechanism. This is Biotin synthase from Leptothrix cholodnii (strain ATCC 51168 / LMG 8142 / SP-6) (Leptothrix discophora (strain SP-6)).